The primary structure comprises 448 residues: Two-component sensor PhoQ (448 aa).

The first 33 residues, 1–33, serve as a signal peptide directing secretion; that stretch reads MIRSLRIRLMLGAAALAVLFMLALLPALQRAFG. The helical transmembrane segment at 169-189 threads the bilayer; that stretch reads WLGGALLVLLGLLWLGLTWGF. Residues 186–237 enclose the HAMP domain; sequence TWGFRAMRGLSSELDQIESGERESLSEEHPRELLRLTHSLNRLLRSEHKQRE. The region spanning 245-448 is the Histidine kinase domain; the sequence is DLAHSLKTPL…ACFRIRFATV (204 aa). His-248 is subject to Phosphohistidine; by autocatalysis.

Its subcellular location is the membrane. The catalysed reaction is ATP + protein L-histidine = ADP + protein N-phospho-L-histidine.. Its function is as follows. Member of the two-component regulatory system PhoP/PhoQ that plays a role in the regulation of resistance towards polymyxin B and cationic antimicrobial peptides in response to limiting concentrations of Mg(2+). May function as a membrane-associated protein kinase that phosphorylates PhoP in response to environmental signals leading to activation of specific gene promoters. In Pseudomonas aeruginosa (strain ATCC 15692 / DSM 22644 / CIP 104116 / JCM 14847 / LMG 12228 / 1C / PRS 101 / PAO1), this protein is Two-component sensor PhoQ (phoQ).